A 384-amino-acid polypeptide reads, in one-letter code: MAQEDYYKVLGVDRDASDQEISKAYRKLAKKYHPDLNHEPGAEEKYKQVNEAYEVLHDKQKRAQYDQFGSAGVNGQGGFGGAGQGFGGAGFDTSGFGDFGDIFGDIFGQGARQQRVDPTQPQRGQDLDYTLTIDFMDAINGKKTQVSYTRDETCETCGGNGCEKGTHPITCDKCHGTGVMTVTQQSMLGMIRRQTTCDKCNGRGVIIEHPCKTCGGKGTVERKNTIEVDIPAGIDNGQQLRYQGQGEAGRNGGPYGDLYISYRIKPSKDFERRGQNIYTEVPISFAQATLGDEITVKTVHGDAKLTIPAGTQPNKKFTLRGQGVPYLRGNGNGDQITTVNIVIPKHINDKQKEDLTNFVHDGGGNITPQEKGFFERLKDKLSGE.

Residues 5–69 (DYYKVLGVDR…QKRAQYDQFG (65 aa)) enclose the J domain. The segment at 141–223 (GKKTQVSYTR…CGGKGTVERK (83 aa)) adopts a CR-type zinc-finger fold. Positions 154, 157, 171, 174, 197, 200, 211, and 214 each coordinate Zn(2+). 4 CXXCXGXG motif repeats span residues 154 to 161 (CETCGGNG), 171 to 178 (CDKCHGTG), 197 to 204 (CDKCNGRG), and 211 to 218 (CKTCGGKG).

This sequence belongs to the DnaJ family. As to quaternary structure, homodimer. Zn(2+) serves as cofactor.

It localises to the cytoplasm. Functionally, participates actively in the response to hyperosmotic and heat shock by preventing the aggregation of stress-denatured proteins and by disaggregating proteins, also in an autonomous, DnaK-independent fashion. Unfolded proteins bind initially to DnaJ; upon interaction with the DnaJ-bound protein, DnaK hydrolyzes its bound ATP, resulting in the formation of a stable complex. GrpE releases ADP from DnaK; ATP binding to DnaK triggers the release of the substrate protein, thus completing the reaction cycle. Several rounds of ATP-dependent interactions between DnaJ, DnaK and GrpE are required for fully efficient folding. Also involved, together with DnaK and GrpE, in the DNA replication of plasmids through activation of initiation proteins. This chain is Chaperone protein DnaJ, found in Lactobacillus acidophilus (strain ATCC 700396 / NCK56 / N2 / NCFM).